We begin with the raw amino-acid sequence, 638 residues long: UvrABC system protein C (638 aa).

The region spanning 20–97 is the GIY-YIG domain; that stretch reads ECAGVYQMFD…IKKFQPKFNI (78 aa). Positions 209–244 constitute a UVR domain; sequence KELQENLSKKMEELSSHMYFEEAAEIRDRIKALSYV.

The protein belongs to the UvrC family. As to quaternary structure, interacts with UvrB in an incision complex.

It localises to the cytoplasm. Its function is as follows. The UvrABC repair system catalyzes the recognition and processing of DNA lesions. UvrC both incises the 5' and 3' sides of the lesion. The N-terminal half is responsible for the 3' incision and the C-terminal half is responsible for the 5' incision. The chain is UvrABC system protein C from Rickettsia canadensis (strain McKiel).